The following is a 324-amino-acid chain: NADH-ubiquinone oxidoreductase chain 1 (324 aa).

The next 8 helical transmembrane spans lie at 9 to 29 (LTMA…LTLV), 75 to 95 (ILFI…WIPL), 106 to 126 (LGLL…LWSG), 142 to 162 (VAQT…VIML), 177 to 197 (PLYL…STLA), 228 to 248 (LFFL…AILF), 259 to 279 (ELFP…FLWV), and 300 to 320 (LPLT…YAGI).

The protein belongs to the complex I subunit 1 family.

It is found in the mitochondrion inner membrane. The catalysed reaction is a ubiquinone + NADH + 5 H(+)(in) = a ubiquinol + NAD(+) + 4 H(+)(out). Functionally, core subunit of the mitochondrial membrane respiratory chain NADH dehydrogenase (Complex I) that is believed to belong to the minimal assembly required for catalysis. Complex I functions in the transfer of electrons from NADH to the respiratory chain. The immediate electron acceptor for the enzyme is believed to be ubiquinone. In Struthio camelus (Common ostrich), this protein is NADH-ubiquinone oxidoreductase chain 1 (MT-ND1).